A 446-amino-acid polypeptide reads, in one-letter code: Serine decarboxylase 3 (446 aa).

Position 162 (histidine 162) interacts with substrate. N6-(pyridoxal phosphate)lysine is present on lysine 274.

Belongs to the group II decarboxylase family. Pyridoxal 5'-phosphate is required as a cofactor.

It catalyses the reaction L-serine + H(+) = ethanolamine + CO2. In terms of biological role, catalyzes the biosynthesis of ethanolamine from serine. Decarboxylation of free serine is the major source of ethanolamine production in plants and ethanolamine metabolism is crucial for the synthesis of choline, phosphatidylethanolamine (PE) and phosphatidylcholine (PC), and thus for plant growth. This is Serine decarboxylase 3 from Oryza sativa subsp. japonica (Rice).